Here is a 91-residue protein sequence, read N- to C-terminus: Elongation factor 1-beta (91 aa).

Belongs to the EF-1-beta/EF-1-delta family.

Promotes the exchange of GDP for GTP in EF-1-alpha/GDP, thus allowing the regeneration of EF-1-alpha/GTP that could then be used to form the ternary complex EF-1-alpha/GTP/AAtRNA. The chain is Elongation factor 1-beta from Sulfurisphaera tokodaii (strain DSM 16993 / JCM 10545 / NBRC 100140 / 7) (Sulfolobus tokodaii).